A 96-amino-acid chain; its full sequence is Muconolactone Delta-isomerase (96 aa).

This sequence belongs to the muconolactone Delta-isomerase family. In terms of assembly, homodecamer.

It catalyses the reaction (S)-muconolactone = (4,5-dihydro-5-oxofuran-2-yl)-acetate. The protein operates within aromatic compound metabolism; beta-ketoadipate pathway; 5-oxo-4,5-dihydro-2-furylacetate from catechol: step 3/3. The sequence is that of Muconolactone Delta-isomerase (catC) from Pseudomonas aeruginosa (strain ATCC 15692 / DSM 22644 / CIP 104116 / JCM 14847 / LMG 12228 / 1C / PRS 101 / PAO1).